A 793-amino-acid polypeptide reads, in one-letter code: Potassium transporter 18 (793 aa).

Over 1 to 53 (METRTNEYSRKGAMWELERNLDQPMDAEAGRLRNMYREKTYPTILLLRLAFQS) the chain is Cytoplasmic. The helical transmembrane segment at 54-74 (LGVVFGDLGTSPLYVFYNIFP) threads the bilayer. The Extracellular portion of the chain corresponds to 75–86 (HGIEDTEQVIGA). The helical transmembrane segment at 87 to 107 (LSLIIYSLTLIPLVKYVFIVL) threads the bilayer. The Cytoplasmic portion of the chain corresponds to 108–172 (RANDNGQGGT…WLEGHQFRKN (65 aa)). The chain crosses the membrane as a helical span at residues 173-193 (LILILVLFGTCMAVGDGILTP). The Extracellular segment spans residues 194–214 (AISVLSATGGIQVEEGRMRND). A helical transmembrane segment spans residues 215-235 (VVVIISVLILIGLFSMQHYGT). Over 236-237 (DK) the chain is Cytoplasmic. The helical transmembrane segment at 238–258 (VSWLFAPIVFVWFILIGILGA) threads the bilayer. Residues 259–287 (VNICKYDHSVLKAFNPVYVYRYFKRGKTS) lie on the Extracellular side of the membrane. The chain crosses the membrane as a helical span at residues 288-308 (WTSLGGIMLSITGTEALFADL). Position 309 (Ser309) is a topological domain, cytoplasmic. The chain crosses the membrane as a helical span at residues 310 to 330 (YFPVQAIQIAFTVVVFPCLLL). At 331-351 (QYTGQAAFIAANTNQVSHAFY) the chain is on the extracellular side. The helical transmembrane segment at 352-372 (ISLPAPILWPAFAVATAAAIV) threads the bilayer. Topologically, residues 373–409 (ASQATISATYSIIKQALALGCFPRVKIIHTSKKYLGQ) are cytoplasmic. Residues 410-430 (IYSPDINWILMVFCIAVTAGF) form a helical membrane-spanning segment. The Extracellular segment spans residues 431-442 (KNQSQIANAYGT). N-linked (GlcNAc...) asparagine glycosylation occurs at Asn432. Residues 443–463 (AVIMVMLVTTFLMIPIMLLVW) form a helical membrane-spanning segment. The Cytoplasmic segment spans residues 464-468 (RSHWT). A helical membrane pass occupies residues 469 to 489 (LVVAFTVLSLLVEIPYFSAVV). Residues 490-494 (RKIDQ) lie on the Extracellular side of the membrane. A helical transmembrane segment spans residues 495 to 515 (GGWVPLVFAAGFMIIMYVWHY). The Cytoplasmic segment spans residues 516–793 (GTLKRYEFEM…MLNVGQVFYV (278 aa)).

It belongs to the HAK/KUP transporter (TC 2.A.72.3) family.

Its subcellular location is the membrane. In terms of biological role, high-affinity potassium transporter. In Oryza sativa subsp. japonica (Rice), this protein is Potassium transporter 18 (HAK18).